Consider the following 431-residue polypeptide: Enolase (431 aa).

Gln163 contributes to the (2R)-2-phosphoglycerate binding site. Glu205 acts as the Proton donor in catalysis. Mg(2+) contacts are provided by Asp242, Glu288, and Asp315. Residues Lys340, Arg369, Ser370, and Lys391 each contribute to the (2R)-2-phosphoglycerate site. The active-site Proton acceptor is the Lys340.

It belongs to the enolase family. It depends on Mg(2+) as a cofactor.

Its subcellular location is the cytoplasm. The protein localises to the secreted. It localises to the cell surface. The catalysed reaction is (2R)-2-phosphoglycerate = phosphoenolpyruvate + H2O. Its pathway is carbohydrate degradation; glycolysis; pyruvate from D-glyceraldehyde 3-phosphate: step 4/5. Functionally, catalyzes the reversible conversion of 2-phosphoglycerate (2-PG) into phosphoenolpyruvate (PEP). It is essential for the degradation of carbohydrates via glycolysis. The sequence is that of Enolase from Acholeplasma laidlawii (strain PG-8A).